Reading from the N-terminus, the 179-residue chain is Large ribosomal subunit protein uL6 (179 aa).

It belongs to the universal ribosomal protein uL6 family. As to quaternary structure, part of the 50S ribosomal subunit.

In terms of biological role, this protein binds to the 23S rRNA, and is important in its secondary structure. It is located near the subunit interface in the base of the L7/L12 stalk, and near the tRNA binding site of the peptidyltransferase center. This chain is Large ribosomal subunit protein uL6, found in Pelobacter propionicus (strain DSM 2379 / NBRC 103807 / OttBd1).